A 346-amino-acid chain; its full sequence is T-box protein 12 (346 aa).

The span at 33 to 48 (DEEDVEVDVEDVDDVD) shows a compositional bias: acidic residues. Residues 33–66 (DEEDVEVDVEDVDDVDLSSIPSKSPERSRGRPKI) form a disordered region. Residues 86-268 (LWAKFFDLGT…KNPFAKGFRD (183 aa)) constitute a DNA-binding region (T-box).

The protein resides in the nucleus. Functionally, transcription factor. Involved in cell fate determination; required to pattern the posterior hindgut. Involved in motor neuron fate determination and maintenance, acting as a transcriptional repressor to counteract gene activation by transcription factor unc-3 in a subset of motor neurons. Required throughout development to repress transcription by unc-3, probably acting by binding to specific promoter elements. Represses expression of VA and VB motor neuron-specific effector genes, such as DEG/ENaC channel del-1 and the innexin inx-12, in DA and DB motor neurons. Represses expression of transcription factor bnc-1, perhaps acting directly, in DA and DB motor neurons. The chain is T-box protein 12 (mab-9) from Caenorhabditis elegans.